A 393-amino-acid chain; its full sequence is MTTFDKGAKPDIGTFVAFDHVRFVVGNAKQAAYWYCANFGFEPFAYKGLETGSRITAQHAIRQDKIVFIFESALLPDNSELGNHLVQHGDGVKDVCFEVEDLDSIIAHAKAAGATIVHDITEESDADGSIRYATLRTYGETDHTLLERKNYRGAFLPGFKAHPMPATFFKTLPRVGLNFLDHCVGNQPDLQMDSAVQWYEKVLKFHRFWSVDDSMIHTEYSALRSIVVTNFEETIKMPINEPATSDKKAISQIQEYVDYYGGSGVQHIALNTSDIITAIEALRARGCEFLSIPSSYYDNLKERLAASSMVVKEDMDRLQKLHILVDFDENGYLLQIFSKPCQDRPTLFLEIIQRQNHEGFGAGNFKALFESIELEQTKRGNLFYDNVKDGNTK.

2 consecutive VOC domains span residues 17 to 148 and 179 to 339; these read AFDH…LLER and FLDH…IFSK. Residues H182, H267, and E350 each contribute to the Fe cation site.

Belongs to the 4HPPD family. Fe cation is required as a cofactor. In terms of tissue distribution, expressed in the hypodermis and intestine.

It carries out the reaction 3-(4-hydroxyphenyl)pyruvate + O2 = homogentisate + CO2. It participates in amino-acid degradation; L-phenylalanine degradation; acetoacetate and fumarate from L-phenylalanine: step 3/6. In terms of biological role, key enzyme in the degradation of tyrosine. The protein is 4-hydroxyphenylpyruvate dioxygenase of Caenorhabditis elegans.